The primary structure comprises 182 residues: uncharacterized protein (182 aa).

Disordered regions lie at residues 17 to 53 and 128 to 159; these read AVSQAQGRPGHPDAPPNIYEGGLGSPQPQCPSAQGSK and DSLGSSASSSSMDPDKGALPQPSPSRLRPKRS. Positions 42-53 are enriched in polar residues; the sequence is PQPQCPSAQGSK. Positions 129-138 are enriched in low complexity; the sequence is SLGSSASSSS.

This is an uncharacterized protein from Homo sapiens (Human).